We begin with the raw amino-acid sequence, 2385 residues long: Neuron navigator 3 (2385 aa).

Residues 17-38 (SKPVHTALPIPNLGTTGSQHCS) form a disordered region. Polar residues predominate over residues 29-38 (LGTTGSQHCS). In terms of domain architecture, Calponin-homology (CH) spans 77-184 (KEDSKIYTDW…LFFSLSRYKQ (108 aa)). Positions 203-625 (VTHASPPSEA…LPQQQQHSHP (423 aa)) are disordered. 3 stretches are compositionally biased toward polar residues: residues 210-243 (SEAS…TSQK), 258-279 (GSSS…FNSI), and 297-316 (KGPQ…STAG). Residues 318 to 329 (PPASAIPSPSAS) are compositionally biased toward low complexity. The span at 335 to 352 (KSMNVKHSATSTMLTVKQ) shows a compositional bias: polar residues. Composition is skewed to low complexity over residues 353-363 (SSTATSPTPSS) and 427-439 (NSGL…TNSS). Basic and acidic residues predominate over residues 465–491 (PKEKEEKNRDKNKVCTEKPVKEEKDQV). Over residues 521-535 (IPSSSGIPKPGSKVP) the composition is skewed to low complexity. 3 stretches are compositionally biased toward polar residues: residues 537–548 (VKQTISPGSTAS), 557–567 (TKGSPSQSLSK), and 591–625 (ASPS…HSHP). The stretch at 679-707 (ETRRMRTVKNIADLRQNLEETMSSLRGTQ) forms a coiled coil. Disordered stretches follow at residues 877–1312 (ADSW…SPLF), 1351–1370 (SSSS…TSLH), 1410–1468 (LSES…SAMS), 1650–1778 (GALN…KRQN), 1850–1881 (DRLK…SRQS), and 2360–2385 (SSTQ…ESTL). Over residues 882–895 (DSSSVSSGLSDTLD) the composition is skewed to low complexity. A compositionally biased stretch (polar residues) spans 896–925 (NISTDDLNTTSSVSSYSNITVPSRKNTQLR). Basic and acidic residues predominate over residues 942–959 (EELKKPEEDFDSHGDAGG). A compositionally biased stretch (polar residues) spans 979–988 (ASLSVSQTGS). A compositionally biased stretch (basic and acidic residues) spans 1014–1026 (GKTDDAKASEKGK). Composition is skewed to low complexity over residues 1074–1092 (GSSA…GSAT) and 1157–1170 (SSTS…SSKS). A compositionally biased stretch (polar residues) spans 1187 to 1196 (GRSSPVTVNQ). 2 stretches are compositionally biased toward low complexity: residues 1206–1226 (VSDS…TSAS) and 1253–1263 (GAKAGGKSASA). Residues 1264-1289 (PNTEGVKSSSVMPSPSTTLARQGSLE) are compositionally biased toward polar residues. Gly residues predominate over residues 1296 to 1305 (GSMGSAGGLS). Residues 1436–1445 (NQEEGKEWLR) are compositionally biased toward basic and acidic residues. Residues 1446–1462 (SHSTGGLQDTGNQSPLV) show a composition bias toward polar residues. A phosphoserine mark is found at Ser1459 and Ser1463. Residues 1562–1653 (AEEKAHSEQI…AQAAIQGALN (92 aa)) are a coiled coil. The segment covering 1672–1689 (SVSSINSATSHSSIGSGN) has biased composition (low complexity). The span at 1701 to 1714 (WVNSRGSELRSSFK) shows a compositional bias: polar residues. Residues 1794–1861 (EAEAEIILQL…LKAETGNTAK (68 aa)) adopt a coiled-coil conformation. Over residues 1867 to 1881 (SESSSSTSSSSSRQS) the composition is skewed to low complexity.

It belongs to the Nav/unc-53 family. In terms of tissue distribution, highly expressed in brain. Expressed at low levels in heart and placenta. Present in activated T-cells but not in resting T-cells (at protein level). Down-regulated in primary neuroblastoma.

The protein localises to the nucleus outer membrane. Its function is as follows. Plays a role in cell migration. May be involved in neuron regeneration. May regulate IL2 production by T-cells. This is Neuron navigator 3 (NAV3) from Homo sapiens (Human).